The following is a 197-amino-acid chain: Holliday junction branch migration complex subunit RuvA (197 aa).

Residues Met1–His63 are domain I. The interval Thr64–Gln142 is domain II. Positions Gln142–Ala146 are flexible linker. Residues Lys147–Gly197 are domain III.

This sequence belongs to the RuvA family. In terms of assembly, homotetramer. Forms an RuvA(8)-RuvB(12)-Holliday junction (HJ) complex. HJ DNA is sandwiched between 2 RuvA tetramers; dsDNA enters through RuvA and exits via RuvB. An RuvB hexamer assembles on each DNA strand where it exits the tetramer. Each RuvB hexamer is contacted by two RuvA subunits (via domain III) on 2 adjacent RuvB subunits; this complex drives branch migration. In the full resolvosome a probable DNA-RuvA(4)-RuvB(12)-RuvC(2) complex forms which resolves the HJ.

Its subcellular location is the cytoplasm. Functionally, the RuvA-RuvB-RuvC complex processes Holliday junction (HJ) DNA during genetic recombination and DNA repair, while the RuvA-RuvB complex plays an important role in the rescue of blocked DNA replication forks via replication fork reversal (RFR). RuvA specifically binds to HJ cruciform DNA, conferring on it an open structure. The RuvB hexamer acts as an ATP-dependent pump, pulling dsDNA into and through the RuvAB complex. HJ branch migration allows RuvC to scan DNA until it finds its consensus sequence, where it cleaves and resolves the cruciform DNA. In Streptococcus uberis (strain ATCC BAA-854 / 0140J), this protein is Holliday junction branch migration complex subunit RuvA.